Consider the following 421-residue polypeptide: WD repeat and SOCS box-containing protein 1 (421 aa).

5 WD repeats span residues 124–165 (SRCV…LLLN), 168–208 (DHIE…NMVK), 212–251 (AHQN…MIRK), 254–293 (GHHH…LLME), and 309–346 (ANDR…DCPV). Positions 372–421 (DGSVYFWATPRQVPSLQHICRMSIRRVMSTQEVQKLPVPSKILAFLSYRG) constitute an SOCS box domain.

As to quaternary structure, interacts with DIO2. Component of the probable ECS(WSB1) E3 ubiquitin-protein ligase complex which contains CUL5, RNF7/RBX2, Elongin BC complex and WSB1. Component of a probable ECS-like E3 ubiquitin-protein ligase complex which contains CUL5, RBX1, Elongin BC complex and WSB1. Interacts with CUL5, RNF7, ELOB and ELOC. Binds to HIPK2 through WD40 repeats.

It functions in the pathway protein modification; protein ubiquitination. Functionally, probable substrate-recognition component of a SCF-like ECS (Elongin-Cullin-SOCS-box protein) E3 ubiquitin ligase complex which mediates the ubiquitination and subsequent proteasomal degradation of target proteins. Recognizes type II iodothyronine deiodinase/DIO2. Confers constitutive instability to HIPK2 through proteasomal degradation. The protein is WD repeat and SOCS box-containing protein 1 (Wsb1) of Mus musculus (Mouse).